Here is an 872-residue protein sequence, read N- to C-terminus: Alanine--tRNA ligase (872 aa).

Zn(2+)-binding residues include H567, H571, C669, and H673.

This sequence belongs to the class-II aminoacyl-tRNA synthetase family. Zn(2+) serves as cofactor.

The protein resides in the cytoplasm. It carries out the reaction tRNA(Ala) + L-alanine + ATP = L-alanyl-tRNA(Ala) + AMP + diphosphate. In terms of biological role, catalyzes the attachment of alanine to tRNA(Ala) in a two-step reaction: alanine is first activated by ATP to form Ala-AMP and then transferred to the acceptor end of tRNA(Ala). Also edits incorrectly charged Ser-tRNA(Ala) and Gly-tRNA(Ala) via its editing domain. This is Alanine--tRNA ligase from Streptococcus pyogenes serotype M4 (strain MGAS10750).